Reading from the N-terminus, the 260-residue chain is Emerin (260 aa).

M1 carries the N-acetylmethionine modification. One can recognise an LEM domain in the interval 1 to 45 (MDDYAVLSDTELAAVLRQYNIPHGPILGSTRKLYEKKIFEYETQR). 2 positions are modified to phosphoserine: S8 and S29. An interaction with F-actin region spans residues 46 to 224 (RRLSPPSSSS…PTAALGQDRQ (179 aa)). At S49 the chain carries Phosphoserine; by PKA. Residues S54, S69, S72, S88, S99, S142, S143, and S144 each carry the phosphoserine modification. At Y162 the chain carries Phosphotyrosine. The interaction with CTNNB1 stretch occupies residues 169-188 (RPISNVSRSSLGLSYYPRSS). 3 positions are modified to phosphoserine: S172, S175, and S177. The tract at residues 184–206 (YPRSSTSSVSSSSSSPSSWLTRR) is disordered. Over residues 187–201 (SSTSSVSSSSSSPSS) the composition is skewed to low complexity. The chain crosses the membrane as a helical span at residues 225 to 245 (VPLWGQLLLFLAFATFLLFVY).

Interacts with lamins A and C, BANF1, GMCL, BCLAF1 and YTHDC1/YT521. Interacts with TMEM43; the interaction retains emerin in the inner nuclear membrane. Interacts with ACTB, SPTAN1, F-actin, CTNNB1 and beta-tubulin. Interacts with SUN1 and SUN2. Interacts with TMEM201. Interacts with NEMP1.

The protein localises to the nucleus inner membrane. It is found in the nucleus outer membrane. Stabilizes and promotes the formation of a nuclear actin cortical network. Stimulates actin polymerization in vitro by binding and stabilizing the pointed end of growing filaments. Inhibits beta-catenin activity by preventing its accumulation in the nucleus. Acts by influencing the nuclear accumulation of beta-catenin through a CRM1-dependent export pathway. Links centrosomes to the nuclear envelope via a microtubule association. Required for proper localization of non-farnesylated prelamin-A/C. Together with NEMP1, contributes to nuclear envelope stiffness in germ cells. The sequence is that of Emerin (Emd) from Rattus norvegicus (Rat).